The chain runs to 398 residues: Argininosuccinate lyase (398 aa).

The protein belongs to the lyase 1 family. Argininosuccinate lyase subfamily.

It is found in the cytoplasm. It carries out the reaction 2-(N(omega)-L-arginino)succinate = fumarate + L-arginine. It functions in the pathway amino-acid biosynthesis; L-arginine biosynthesis; L-arginine from L-ornithine and carbamoyl phosphate: step 3/3. In Thermotoga neapolitana (strain ATCC 49049 / DSM 4359 / NBRC 107923 / NS-E), this protein is Argininosuccinate lyase.